Consider the following 238-residue polypeptide: Cysteine-rich venom protein 1 (238 aa).

The N-terminal stretch at 1-19 (MIAFIVLLSLAAVLQQSSG) is a signal peptide. Positions 38-164 (VDKHNALRRS…STKYLYVCQY (127 aa)) constitute an SCP domain. Disulfide bonds link Cys-75-Cys-153, Cys-92-Cys-165, Cys-148-Cys-162, Cys-184-Cys-191, Cys-187-Cys-196, Cys-200-Cys-233, Cys-209-Cys-227, and Cys-218-Cys-231. In terms of domain architecture, ShKT spans 200–233 (CEYEDTFSNCKALAKKTKCKTEWIKSKCPATCFC).

It belongs to the CRISP family. As to expression, expressed by the venom gland.

The protein localises to the secreted. Its function is as follows. Blocks contraction of smooth muscle elicited by high potassium-induced depolarization, but does not block caffeine-stimulated contraction. May target voltage-gated calcium channels on smooth muscle. In Hydrophis hardwickii (Hardwick's spine-bellied seasnake), this protein is Cysteine-rich venom protein 1.